A 158-amino-acid chain; its full sequence is MGSGSSRSSRTLRRRRSPESLPAGPGAAALEGGTRRRVPVAAAEVPGAAAEEAPGRDPSPVAPPDGRDETLRLLDELLAESAAWGPPEPAPRRPARLRPTAVAGSAVCAEQSTEGHPGSGNVSEAPGSGRKKPERPAAISYDHSEEGLMASIEREYCR.

The interval 1–146 (MGSGSSRSSR…AAISYDHSEE (146 aa)) is disordered. The N-myristoyl glycine moiety is linked to residue G2. 2 stretches are compositionally biased toward low complexity: residues 19-32 (ESLP…ALEG) and 39-52 (PVAA…AAEE). The Ciliary targeting motif motif lies at 29–33 (ALEGG). Basic and acidic residues predominate over residues 65–75 (DGRDETLRLLD).

In terms of assembly, interacts (when myristoylated) with UNC119 and UNC119B; interaction is required for localization to cilium. As to expression, expressed at high levels in the kidney and pancreas. Moderate expression seen in the skeletal muscle, liver and heart. A weak expression seen in the brain, lung, uterus, prostate, testis, small intestine and colon.

It is found in the cell projection. Its subcellular location is the cilium membrane. It localises to the cytoplasm. The protein localises to the cytoskeleton. The protein resides in the cilium axoneme. The protein is Cystin-1 (CYS1) of Homo sapiens (Human).